We begin with the raw amino-acid sequence, 946 residues long: Serine/threonine-protein kinase PLK4 (946 aa).

Residues 12–265 (FKVLNLLGKG…LSSVLDHAFM (254 aa)) form the Protein kinase domain. ATP-binding positions include 18-26 (LGKGSFACV) and K41. The active-site Proton acceptor is the D136. The segment at 330–395 (HPAERSNGGS…TYGKPSSFSE (66 aa)) is disordered. Over residues 378 to 394 (RSGTSQSQTYGKPSSFS) the composition is skewed to polar residues. In terms of domain architecture, Cryptic POLO box 1 (CPB1) spans 566–679 (TLRSIISPLN…AKFIQLVRSK (114 aa)). A Cryptic POLO box 2 (CPB2) domain is found at 680-792 (MPKVTYYTRY…GRRPAITESP (113 aa)). Residues 789–828 (TESPRTQLTVDSARERKDEQSSANRVLHSSATSPPQIPNI) are disordered. Positions 809-828 (SSANRVLHSSATSPPQIPNI) are enriched in polar residues. The POLO box domain maps to 864 to 942 (QVLKSVFVEN…LSSILMLFAS (79 aa)).

It belongs to the protein kinase superfamily. Ser/Thr protein kinase family. CDC5/Polo subfamily. Homodimer. In terms of processing, ubiquitinated; leading to its degradation by the proteasome.

The protein localises to the cytoplasm. Its subcellular location is the cytoskeleton. The protein resides in the microtubule organizing center. It is found in the centrosome. It localises to the centriole. The enzyme catalyses L-seryl-[protein] + ATP = O-phospho-L-seryl-[protein] + ADP + H(+). It catalyses the reaction L-threonyl-[protein] + ATP = O-phospho-L-threonyl-[protein] + ADP + H(+). In terms of biological role, serine/threonine-protein kinase that plays a central role in centriole duplication. Able to trigger procentriole formation on the surface of the parental centriole cylinder, leading to the recruitment of centriole biogenesis proteins such as sass6, cpap, ccp110, cep135 and gamma-tubulin. When overexpressed, it is able to induce centrosome amplification through the simultaneous generation of multiple procentrioles adjoining each parental centriole during S phase. Its central role in centriole replication suggests a possible role in tumorigenesis, centrosome aberrations being frequently observed in tumors. Also involved in deuterosome-mediated centriole amplification in multiciliated that can generate more than 100 centrioles. In Xenopus tropicalis (Western clawed frog), this protein is Serine/threonine-protein kinase PLK4.